The chain runs to 216 residues: uncharacterized protein (216 aa).

The helical transmembrane segment at 5–22 (LGLVFGSVILIYLISLFL) threads the bilayer.

The protein localises to the membrane. This is an uncharacterized protein from Aquifex aeolicus (strain VF5).